Here is an 812-residue protein sequence, read N- to C-terminus: Phosphoenolpyruvate synthase (812 aa).

The Tele-phosphohistidine intermediate role is filled by H430. Substrate is bound by residues R520, R588, E690, G711, S712, N713, and D714. E690 is a Mg(2+) binding site. Residue D714 coordinates Mg(2+). The active-site Proton donor is the C761.

The protein belongs to the PEP-utilizing enzyme family. Mg(2+) serves as cofactor.

It carries out the reaction pyruvate + ATP + H2O = phosphoenolpyruvate + AMP + phosphate + 2 H(+). The protein operates within carbohydrate biosynthesis; gluconeogenesis. Its function is as follows. Catalyzes the phosphorylation of pyruvate to phosphoenolpyruvate. The sequence is that of Phosphoenolpyruvate synthase (ppsA) from Helicobacter pylori (strain ATCC 700392 / 26695) (Campylobacter pylori).